We begin with the raw amino-acid sequence, 93 residues long: Small ribosomal subunit protein bS20c (93 aa).

The protein belongs to the bacterial ribosomal protein bS20 family.

Its subcellular location is the plastid. The protein resides in the chloroplast. Its function is as follows. Binds directly to 16S ribosomal RNA. This is Small ribosomal subunit protein bS20c from Trieres chinensis (Marine centric diatom).